Reading from the N-terminus, the 310-residue chain is MSADFRHEPVLANEILELLRPRPGELFLDGTLGGGGHSGLLLEAGARVIALDKDPRALAAATARLARFGEAFRAVRSDFRDAKNVLQALGIAAVDGALVDLGVSSPQLDEAERGFSFSRPGPLDMRMGDTGETLEDLLRRIDERELARILREYGEEPFARPVARAVKAALETEAPLDTARLAEVVAGAIPRKAWPHRIHPATRTFQALRIAVNDELGALAAWLDGLPGVLAPGGRAAAISFHSLEDRMVKEKFRALTQACTCPPDLPVCACGAKASFAAITRKAVKASDEEIARNPRARSARLRAVEKLR.

Residues 35–37, aspartate 52, phenylalanine 79, aspartate 100, and glutamine 107 each bind S-adenosyl-L-methionine; that span reads GGH.

Belongs to the methyltransferase superfamily. RsmH family.

The protein resides in the cytoplasm. The enzyme catalyses cytidine(1402) in 16S rRNA + S-adenosyl-L-methionine = N(4)-methylcytidine(1402) in 16S rRNA + S-adenosyl-L-homocysteine + H(+). In terms of biological role, specifically methylates the N4 position of cytidine in position 1402 (C1402) of 16S rRNA. The protein is Ribosomal RNA small subunit methyltransferase H of Anaeromyxobacter sp. (strain K).